A 140-amino-acid polypeptide reads, in one-letter code: Large ribosomal subunit protein uL3 (140 aa).

The protein belongs to the universal ribosomal protein uL3 family. As to quaternary structure, part of the 50S ribosomal subunit. Forms a cluster with proteins L14 and L19.

Functionally, one of the primary rRNA binding proteins, it binds directly near the 3'-end of the 23S rRNA, where it nucleates assembly of the 50S subunit. The protein is Large ribosomal subunit protein uL3 (rplC) of Planobispora rosea.